The sequence spans 256 residues: Alcohol dehydrogenase (256 aa).

An NAD(+)-binding site is contributed by 12 to 35 (FVAGLGGIGLDTSREIVKAGPKNL). A substrate-binding site is contributed by Ser140. Tyr153 serves as the catalytic Proton acceptor.

This sequence belongs to the short-chain dehydrogenases/reductases (SDR) family. Homodimer.

The catalysed reaction is a primary alcohol + NAD(+) = an aldehyde + NADH + H(+). The enzyme catalyses a secondary alcohol + NAD(+) = a ketone + NADH + H(+). The protein is Alcohol dehydrogenase (Adh) of Zaprionus tuberculatus (Vinegar fly).